Consider the following 217-residue polypeptide: Ranaspumin (217 aa).

4 disulfide bridges follow: C18/C67, C38/C114, C125/C168, and C146/C207.

As to quaternary structure, monomer. In terms of tissue distribution, exclusively expressed in females in the early oviduct, the glandular part of the oviduct (pars convoluta dilata) and in the cloaca.

The protein localises to the secreted. Its function is as follows. Acts as a surfactant. Is the major protein constituent (45%) of foam nests. Has no antimicrobial activity, no larvicidal activity, and is not toxic to mice. This Leptodactylus vastus (Northeastern pepper frog) protein is Ranaspumin.